The sequence spans 442 residues: G-protein coupled receptor family C group 5 member C (442 aa).

An N-terminal signal peptide occupies residues 1–23 (MAIHRTVLMCLGLPLFLLPGARA). At 24-50 (QEQAPPGCSPDLNPLYYNLCDRSEAWG) the chain is on the extracellular side. Residues 51–71 (IILEAVAGAGVVTTFVLTIIL) form a helical membrane-spanning segment. Over 72-85 (VASLPFVQDTKKRS) the chain is Cytoplasmic. A helical membrane pass occupies residues 86–106 (LLGTQVFFLLGTLGLFCLVFA). The Extracellular portion of the chain corresponds to 107 to 120 (CVVKPSFSTCASRR). A helical membrane pass occupies residues 121-141 (FLFGVLFAICFSCLVAHVLAL). At 142 to 155 (HFLVRKNHGPRGWV) the chain is on the cytoplasmic side. A helical membrane pass occupies residues 156–176 (IFLVALLLSLVEVIINTEWLI). The Extracellular portion of the chain corresponds to 177 to 209 (ITLVRGAGTEGDALGNGSAGWVAVSPCAIANAD). Residue Asn-192 is glycosylated (N-linked (GlcNAc...) asparagine). A helical membrane pass occupies residues 210-230 (FVMALIYVMLLLLCAFSGAWS). The Cytoplasmic portion of the chain corresponds to 231-242 (ALCGRFKRWRKH). The chain crosses the membrane as a helical span at residues 243 to 263 (GVFILLTTTASIAVWVVWIVM). Topologically, residues 264–280 (YTYGNRQHNSPTWDDPT) are extracellular. The chain crosses the membrane as a helical span at residues 281–301 (LAIALATNAWAFVLFYVIPEV). Residues 302-442 (SQVTRSSPEQ…QVFRNPYVWD (141 aa)) are Cytoplasmic-facing. Ser-345, Ser-384, Ser-404, and Ser-407 each carry phosphoserine. A Phosphotyrosine modification is found at Tyr-415. Residue Thr-424 is modified to Phosphothreonine.

The protein belongs to the G-protein coupled receptor 3 family.

It is found in the cell membrane. Its function is as follows. This retinoic acid-inducible G-protein coupled receptor provide evidence for a possible interaction between retinoid and G-protein signaling pathways. The polypeptide is G-protein coupled receptor family C group 5 member C (GPRC5C) (Bos taurus (Bovine)).